Consider the following 403-residue polypeptide: Cytochrome P450-SU2 (403 aa).

Residues methionine 1 to proline 24 form a disordered region. Cysteine 352 contacts heme.

The protein belongs to the cytochrome P450 family. Heme serves as cofactor.

In terms of biological role, metabolism of a number of sulfonylurea herbicides. The protein is Cytochrome P450-SU2 (cyp105B1) of Streptomyces griseolus.